A 1258-amino-acid chain; its full sequence is Ice nucleation protein (1258 aa).

Positions 162–1217 are octapeptide periodicity; that stretch reads ATYGSTLSGT…LTAGENSVLI (1056 aa). 5 disordered regions span residues 260 to 287, 311 to 342, 356 to 383, 407 to 438, and 452 to 480; these read YGSTQTAGEDSSLTAGYGSTQTAQKGSD, TQTAGEESTQTAGYGSTQTAQKGSDLTAGYGS, and YGSTQTAGEDSSLTAGYGSTQTAQKGSDL. 5 stretches are compositionally biased toward polar residues: residues 261-286, 311-334, 357-382, 407-430, and 453-480; these read GSTQTAGEDSSLTAGYGSTQTAQKGS, TQTAGEESTQTAGYGSTQTAQKGS, and GSTQTAGEDSSLTAGYGSTQTAQKGSDL.

This sequence belongs to the bacterial ice nucleation protein family.

Its subcellular location is the cell outer membrane. Its function is as follows. Ice nucleation proteins enable bacteria to nucleate crystallization in supercooled water. The polypeptide is Ice nucleation protein (iceE) (Enterobacter agglomerans (Erwinia herbicola)).